A 360-amino-acid chain; its full sequence is Inhibin alpha chain (360 aa).

The signal sequence occupies residues 1–17 (MWLQLLLLLLAPQGGHG). The propeptide occupies 18-60 (CHGLELDRELVLAKVRALFLDALGPPPVTGEGGDPGVRRLHRR). A propeptide spans 61 to 226 (HAVGGFMRRG…PPSGGERARR (166 aa)) (inhibin alpha N-terminal region). N-linked (GlcNAc...) asparagine glycosylation is found at asparagine 140 and asparagine 262. 3 disulfides stabilise this stretch: cysteine 256-cysteine 322, cysteine 285-cysteine 357, and cysteine 289-cysteine 359.

This sequence belongs to the TGF-beta family. In terms of assembly, dimeric, linked by one or more disulfide bonds. Activin B is a dimer of alpha and beta-B. Inhibin A is a dimer of alpha and beta-A. Inhibin B is a dimer of alpha and beta-B. Interacts with TGFBR3L; this interaction regulates female fertility. Post-translationally, proteolytic processing yields a number of bioactive forms, consisting either solely of the mature alpha chain, of the most N-terminal propeptide linked through a disulfide bond to the mature alpha chain, or of the entire proprotein.

The protein resides in the secreted. Its function is as follows. Inhibins and activins inhibit and activate, respectively, the secretion of follitropin by the pituitary gland. Inhibins/activins are involved in regulating a number of diverse functions such as hypothalamic and pituitary hormone secretion, gonadal hormone secretion, germ cell development and maturation, erythroid differentiation, insulin secretion, nerve cell survival, embryonic axial development or bone growth, depending on their subunit composition. Inhibins appear to oppose the functions of activins. In terms of biological role, inhibin A is a dimer of alpha/INHA and beta-A/INHBA that functions as a feedback regulator in the hypothalamic-pituitary-gonadal (HPG) axis. Inhibits the secretion of FSH from the anterior pituitary gland by acting on pituitary gonadotrope cells. Antagonizes activin A by binding to the proteoglycan, betaglycan, and forming a stable complex with and, thereby, sequestering type II activin receptors while excluding type I receptor. Inhibin B is a dimer of alpha and beta-B that plays a crucial role in the regulation of the reproductive system by inhibiting the secretion of follicle-stimulating hormone (FSH) from the anterior pituitary gland. Thereby, maintains reproductive homeostasis in both males and females. Acts as a more potent suppressor of FSH release than inhibin A. Functions as competitive receptor antagonist binding activin type II receptors with high affinity in the presence of the TGF-beta type III coreceptor/TGFBR3L. This chain is Inhibin alpha chain (INHA), found in Bos taurus (Bovine).